The primary structure comprises 272 residues: DNA repair protein RecO (272 aa).

The protein belongs to the RecO family.

Its function is as follows. Involved in DNA repair and RecF pathway recombination. The polypeptide is DNA repair protein RecO (Limosilactobacillus fermentum (strain NBRC 3956 / LMG 18251) (Lactobacillus fermentum)).